The following is a 253-amino-acid chain: Ubiquinone biosynthesis O-methyltransferase (253 aa).

Residues arginine 41, glycine 72, aspartate 93, and leucine 136 each contribute to the S-adenosyl-L-methionine site.

Belongs to the methyltransferase superfamily. UbiG/COQ3 family.

The enzyme catalyses a 3-demethylubiquinol + S-adenosyl-L-methionine = a ubiquinol + S-adenosyl-L-homocysteine + H(+). The catalysed reaction is a 3-(all-trans-polyprenyl)benzene-1,2-diol + S-adenosyl-L-methionine = a 2-methoxy-6-(all-trans-polyprenyl)phenol + S-adenosyl-L-homocysteine + H(+). The protein operates within cofactor biosynthesis; ubiquinone biosynthesis. O-methyltransferase that catalyzes the 2 O-methylation steps in the ubiquinone biosynthetic pathway. The protein is Ubiquinone biosynthesis O-methyltransferase of Azorhizobium caulinodans (strain ATCC 43989 / DSM 5975 / JCM 20966 / LMG 6465 / NBRC 14845 / NCIMB 13405 / ORS 571).